We begin with the raw amino-acid sequence, 64 residues long: MTGREGGKKKPLKQPKKDGKEMDEEDMAFKQKQKEQQKAMEAAKQKAAKGGPLVTGGIKKSGKK.

A disordered region spans residues 1-64; sequence MTGREGGKKK…TGGIKKSGKK (64 aa). A coiled-coil region spans residues 21 to 50; the sequence is EMDEEDMAFKQKQKEQQKAMEAAKQKAAKG. Positions 27-44 are enriched in basic and acidic residues; it reads MAFKQKQKEQQKAMEAAK.

It belongs to the TMA7 family.

The chain is Translation machinery-associated protein 7 homolog from Aedes aegypti (Yellowfever mosquito).